A 315-amino-acid chain; its full sequence is Replication-associated protein VP4 (315 aa).

Residues tyrosine 176 and tyrosine 180 each act as O-(5'-phospho-DNA)-tyrosine intermediate in the active site. Residues 253–315 are a coiled coil; the sequence is EYDAKVKLKS…FKQLQEKLKL (63 aa).

The protein belongs to the microviridae Rep protein family.

It carries out the reaction ATP + (deoxyribonucleotide)n-3'-hydroxyl + 5'-phospho-(deoxyribonucleotide)m = (deoxyribonucleotide)n+m + AMP + diphosphate.. In terms of biological role, plays an essential role in viral DNA replication. Binds the origin of replication and cleaves the dsDNA replicative form I (RFI) and becomes covalently bound to it via phosphotyrosine bond, generating the dsDNA replicative form II (RFII). In turn, viral DNA replication initiates at the 3'-OH of the cleavage site. After one round of rolling circle synthesis, protein VP4 is linked to the newly synthesized ssDNA and joins the ends of the displaced strand to generate a circular single-stranded molecule ready to be packed into a virion. In Bdellovibrio bacteriovorus (Bacteriophage phiMH2K), this protein is Replication-associated protein VP4.